An 862-amino-acid chain; its full sequence is Protein argonaute-2 (862 aa).

The 120-residue stretch at 232–351 (PVIEFMCEVL…LPLEVCNIVA (120 aa)) folds into the PAZ domain. Interaction with guide RNA regions lie at residues 314–319 (YFKDRH) and 527–569 (GKTP…LCLK). The Piwi domain maps to 520–821 (LVVVILPGKT…VAFRARYHLV (302 aa)). Residues 590-593 (FQQP) are interaction with GW182 family members. A divalent metal cation is bound at residue Asp-600. Residues 653–663 (LIQFYKSTRFK) are interaction with GW182 family members. Asp-672 lines the a divalent metal cation pocket. Interaction with guide RNA regions lie at residues 712–713 (KR), 756–764 (HAGIQGTSR), and 793–815 (YVRC…VAFR). His-810 lines the a divalent metal cation pocket. The interval 825-847 (HDSAEGSHTSGQSNGRDQQALAK) is disordered. Over residues 830-841 (GSHTSGQSNGRD) the composition is skewed to polar residues.

The protein belongs to the argonaute family. Ago subfamily. In terms of assembly, component of the RISC loading complex (RLC), or micro-RNA (miRNA) loading complex (miRLC), which is composed of dicer1, ago2 and tarbp2. Note that the trimeric RLC/miRLC is also referred to as RISC. The cofactor is Mg(2+). Requires Mn(2+) as cofactor.

Its subcellular location is the cytoplasm. It is found in the P-body. The enzyme catalyses Endonucleolytic cleavage to 5'-phosphomonoester.. In terms of biological role, required for RNA-mediated gene silencing (RNAi) by the RNA-induced silencing complex (RISC). The 'minimal RISC' appears to include ago2 bound to a short guide RNA such as a microRNA (miRNA) or short interfering RNA (siRNA). These guide RNAs direct RISC to complementary mRNAs that are targets for RISC-mediated gene silencing. The precise mechanism of gene silencing depends on the degree of complementarity between the miRNA or siRNA and its target. Binding of RISC to a perfectly complementary mRNA generally results in silencing due to endonucleolytic cleavage of the mRNA specifically by ago2. Binding of RISC to a partially complementary mRNA results in silencing through inhibition of translation, and this is independent of endonuclease activity. The inhibition of translational initiation leads to the accumulation of the affected mRNA in cytoplasmic processing bodies (P-bodies), where mRNA degradation may subsequently occur. The protein is Protein argonaute-2 (ago2) of Xenopus laevis (African clawed frog).